Reading from the N-terminus, the 100-residue chain is Integration host factor subunit alpha (100 aa).

The segment at 53-72 (FDLRDKKQRPGRNPKTGEEI) is disordered.

This sequence belongs to the bacterial histone-like protein family. As to quaternary structure, heterodimer of an alpha and a beta chain.

Its function is as follows. This protein is one of the two subunits of integration host factor, a specific DNA-binding protein that functions in genetic recombination as well as in transcriptional and translational control. This is Integration host factor subunit alpha from Marinobacter nauticus (strain ATCC 700491 / DSM 11845 / VT8) (Marinobacter aquaeolei).